The following is a 362-amino-acid chain: Adenosine deaminase (362 aa).

Zn(2+) contacts are provided by His19 and His21. Substrate contacts are provided by His21, Asp23, and Gly181. His208 lines the Zn(2+) pocket. Residue Glu211 is the Proton donor of the active site. Asp300 serves as a coordination point for Zn(2+).

The protein belongs to the metallo-dependent hydrolases superfamily. Adenosine and AMP deaminases family. Adenosine deaminase subfamily. Requires Zn(2+) as cofactor.

It catalyses the reaction adenosine + H2O + H(+) = inosine + NH4(+). The catalysed reaction is 2'-deoxyadenosine + H2O + H(+) = 2'-deoxyinosine + NH4(+). Its function is as follows. Catalyzes the hydrolytic deamination of adenosine and 2-deoxyadenosine. The sequence is that of Adenosine deaminase from Mycobacteroides abscessus (strain ATCC 19977 / DSM 44196 / CCUG 20993 / CIP 104536 / JCM 13569 / NCTC 13031 / TMC 1543 / L948) (Mycobacterium abscessus).